The chain runs to 431 residues: tRNA (adenine(37)-N6)-methyltransferase (431 aa).

One can recognise a TsaA-like domain in the interval 30–168 (TEPIGYLESC…YIADYDSPQN (139 aa)). S-adenosyl-L-methionine contacts are provided by residues 47–49 (PRQ), 90–91 (HK), arginine 117, leucine 127, and 148–151 (IDGT). The tract at residues 196-242 (LSGRGKVQPRQSTKERPKCLEDRTSGENSQKSRDMSEIQHTLPEDRE) is disordered. The span at 207–242 (STKERPKCLEDRTSGENSQKSRDMSEIQHTLPEDRE) shows a compositional bias: basic and acidic residues.

Belongs to the tRNA methyltransferase O family.

The catalysed reaction is N(6)-L-threonylcarbamoyladenosine(37) in tRNA + S-adenosyl-L-methionine = N(6)-methyl,N(6)-L-threonylcarbamoyladenosine(37) in tRNA + S-adenosyl-L-homocysteine + H(+). S-adenosyl-L-methionine-dependent methyltransferase responsible for the addition of the methyl group in the formation of N6-methyl-N6-threonylcarbamoyladenosine at position 37 (m(6)t(6)A37) of the tRNA anticodon loop of tRNA(Ser)(GCU). The methyl group of m(6)t(6)A37 may improve the efficiency of the tRNA decoding ability. May bind to tRNA. The protein is tRNA (adenine(37)-N6)-methyltransferase of Mus musculus (Mouse).